The chain runs to 428 residues: Flotillin-1 (428 aa).

Ser19, Ser163, and Ser385 each carry phosphoserine. A Phosphothreonine modification is found at Thr387.

The protein belongs to the band 7/mec-2 family. Flotillin subfamily. Heterooligomeric complex of flotillin-1 and flotillin-2 and caveolin-1 and caveolin-2. Interacts with ECPAS. In terms of tissue distribution, high expression in brain, white adipose tissue, heart muscle, skeletal muscle and lung. Low expression in spleen, liver and testis.

It is found in the cell membrane. It localises to the endosome. Its subcellular location is the membrane. The protein localises to the caveola. The protein resides in the melanosome. It is found in the membrane raft. Functionally, may act as a scaffolding protein within caveolar membranes, functionally participating in formation of caveolae or caveolae-like vesicles. This chain is Flotillin-1 (Flot1), found in Mus musculus (Mouse).